The primary structure comprises 102 residues: Large ribosomal subunit protein bL21 (102 aa).

The protein belongs to the bacterial ribosomal protein bL21 family. Part of the 50S ribosomal subunit. Contacts protein L20.

Its function is as follows. This protein binds to 23S rRNA in the presence of protein L20. This chain is Large ribosomal subunit protein bL21, found in Campylobacter jejuni subsp. jejuni serotype O:6 (strain 81116 / NCTC 11828).